The primary structure comprises 146 residues: Large ribosomal subunit protein uL15 (146 aa).

The tract at residues 1–65 is disordered; that stretch reads MSDIQLNSLK…GQMPLQRRLP (65 aa). Over residues 24 to 34 the composition is skewed to gly residues; that stretch reads RGIGSGLGKTA.

This sequence belongs to the universal ribosomal protein uL15 family. As to quaternary structure, part of the 50S ribosomal subunit.

Its function is as follows. Binds to the 23S rRNA. In Bordetella avium (strain 197N), this protein is Large ribosomal subunit protein uL15.